Reading from the N-terminus, the 99-residue chain is Cell division protein FtsB (99 aa).

Over 1 to 3 (MKF) the chain is Cytoplasmic. The helical transmembrane segment at 4–21 (FVIALIVLLGLLQYRLWS) threads the bilayer. The Periplasmic portion of the chain corresponds to 22-99 (GDNSLPEYFV…GDRSVSSPSQ (78 aa)). Positions 31-73 (VLQKQIAAQQEGNAKLNERNQVLKEEIIDLKSGTEAIEERARN) form a coiled coil.

The protein belongs to the FtsB family. Part of a complex composed of FtsB, FtsL and FtsQ.

It localises to the cell inner membrane. In terms of biological role, essential cell division protein. May link together the upstream cell division proteins, which are predominantly cytoplasmic, with the downstream cell division proteins, which are predominantly periplasmic. This Shewanella sp. (strain ANA-3) protein is Cell division protein FtsB.